An 825-amino-acid polypeptide reads, in one-letter code: MDVSLCPAKCSFWRIFLLGSVWLDYVGSVLACPANCVCSKTEINCRRPDDGNLFPLLEGQDSGNSNGNASINITDISRNITSIHIENWRSLHTLNAVDMELYTGLQKLTIKNSGLRSIQPRAFAKNPHLRYINLSSNRLTTLSWQLFQTLSLRELRLEQNFFNCSCDIRWMQLWQEQGEARLNSQNLYCINADGSQLPLFRMNISQCDLPEISVSHVNLTVREGDSAVITCNGSGSPLPDVDWIVTGLQSINTHQTNLNWTNVHAINLTLVNVTSEDNGFTLTCIAENVVGMSNASVALTVYYPPRVVSLEEPELRLEHCIEFVVRGNPPPTLYWLHNGQPLRESKIIHVEYYQEGEISEGCLLFNKPTHYNNGNYTLIAKNPLGTANQTINGHFLKEPFPESTDNFILFDEVSPTPPITVTHKPEEDTFGVSIAVGLAAFACVLLVVLFIMINKYGRRSKFGMKGPVAVISGEEDSASPLHHINHGITTPSSLDAGPDTVVIGMTRIPVIENPQYFRQGHNCHKPDTYVQHIKRRDIVLKRELGEGAFGKVFLAECYNLSPTKDKMLVAVKALKDPTLAARKDFQREAELLTNLQHEHIVKFYGVCGDGDPLIMVFEYMKHGDLNKFLRAHGPDAMILVDGQPXQAKGELGLSQMLHIASQIASGMVYLASQHFVHRDLATRNCXVGANLLVKIGDFGMSRDVYSTDYYRVGGHTMLPIRWMPPESIMYRKFTTESDVWSFGVILWEIFTYGKQPWFQLSNTEVIECITQGRVLERPRVCPKEVYDVMLGCWQREPQQRLNIKEIYKILHALGKATPIYLDILG.

The N-terminal stretch at 1-31 (MDVSLCPAKCSFWRIFLLGSVWLDYVGSVLA) is a signal peptide. Disulfide bonds link Cys32/Cys38 and Cys36/Cys45. The Extracellular segment spans residues 32 to 429 (CPANCVCSKT…TVTHKPEEDT (398 aa)). N-linked (GlcNAc...) asparagine glycans are attached at residues Asn68, Asn72, and Asn79. 2 LRR repeats span residues 104-125 (GLQK…AFAK) and 128-149 (HLRY…LFQT). N-linked (GlcNAc...) asparagine glycosylation is found at Asn133 and Asn163. Residues 160 to 209 (NFFNCSCDIRWMQLWQEQGEARLNSQNLYCINADGSQLPLFRMNISQCDL) enclose the LRRCT domain. Intrachain disulfides connect Cys164-Cys189 and Cys166-Cys207. Residues Asn203, Asn218, Asn232, Asn259, Asn267, Asn272, and Asn294 are each glycosylated (N-linked (GlcNAc...) asparagine). Ig-like C2-type domains follow at residues 210 to 300 (PEIS…VALT) and 309 to 382 (SLEE…IAKN). Cysteines 231 and 284 form a disulfide. A disulfide bridge links Cys320 with Cys362. Asn375 and Asn388 each carry an N-linked (GlcNAc...) asparagine glycan. A helical transmembrane segment spans residues 430–453 (FGVSIAVGLAAFACVLLVVLFIMI). The Cytoplasmic portion of the chain corresponds to 454–825 (NKYGRRSKFG…ATPIYLDILG (372 aa)). Position 493 is a phosphoserine (Ser493). Tyr516 bears the Phosphotyrosine; by autocatalysis mark. In terms of domain architecture, Protein kinase spans 538-825 (IVLKRELGEG…ATPIYLDILG (288 aa)). ATP-binding positions include 544 to 552 (LGEGAFGKV) and Lys572. Catalysis depends on Asp679, which acts as the Proton acceptor. A phosphotyrosine; by autocatalysis mark is found at Tyr705, Tyr709, and Tyr710.

It belongs to the protein kinase superfamily. Tyr protein kinase family. Insulin receptor subfamily. In terms of assembly, exists in a dynamic equilibrium between monomeric (low affinity) and dimeric (high affinity) structures. Binds SH2B2. Interacts with SQSTM1 and KIDINS220. Interacts with PTPRS. Interacts with MAPK8IP3/JIP3. Post-translationally, ligand-mediated auto-phosphorylation.

It localises to the membrane. It catalyses the reaction L-tyrosyl-[protein] + ATP = O-phospho-L-tyrosyl-[protein] + ADP + H(+). Receptor tyrosine kinase involved in nervous system and probably heart development. Upon binding of its ligand NTF3/neurotrophin-3, NTRK3 autophosphorylates and activates different signaling pathways, including the phosphatidylinositol 3-kinase/AKT and the MAPK pathways, that control cell survival and differentiation. This is NT-3 growth factor receptor (NTRK3) from Saimiri boliviensis boliviensis (Bolivian squirrel monkey).